We begin with the raw amino-acid sequence, 399 residues long: Lymphoid enhancer-binding factor 1 (399 aa).

Gly residues predominate over residues 1 to 14 (MPQLSGGGGGGGGD). A CTNNB1-binding region spans residues 1–62 (MPQLSGGGGG…IKSSLVNESE (62 aa)). Residues 1-104 (MPQLSGGGGG…KHPDGGLYNK (104 aa)) form a disordered region. Basic and acidic residues-rich tracts occupy residues 24-45 (IPFK…SHPE) and 82-98 (PYHD…KHPD). Residue Lys-27 forms a Glycyl lysine isopeptide (Lys-Gly) (interchain with G-Cter in SUMO) linkage. At Ser-132 the chain carries Phosphoserine. Thr-155 bears the Phosphothreonine; by NLK mark. At Ser-166 the chain carries Phosphoserine; by NLK. 2 disordered regions span residues 166–192 (SPGS…PAPD) and 268–298 (VKQE…KRPH). A Glycyl lysine isopeptide (Lys-Gly) (interchain with G-Cter in SUMO) cross-link involves residue Lys-269. Positions 269-296 (KQEHPHTDSDLMHVKPQHEQRKEQEPKR) are enriched in basic and acidic residues. The HMG box DNA-binding region spans 299-367 (IKKPLNAFML…LHMQLYPGWS (69 aa)). Residues 369–399 (RDNYGKKKKRKREKLQESASGTGPRMTAAYI) are disordered.

It belongs to the TCF/LEF family. In terms of assembly, binds the armadillo repeat of CTNNB1 and forms a stable complex. Interacts with EP300, TLE1 and PIASG. Binds ALYREF/THOC4, MDFI and MDFIC. Interacts with NLK. Interacts with DAZAP2. Post-translationally, phosphorylated at Thr-155 and/or Ser-166 by NLK. Phosphorylation by NLK at these sites represses LEF1-mediated transcriptional activation of target genes of the canonical Wnt signaling pathway. In terms of tissue distribution, detected in thymus. Not detected in normal colon, but highly expressed in colon cancer biopsies and colon cancer cell lines. Expressed in several pancreatic tumors and weakly expressed in normal pancreatic tissue. Isoforms 1 and 5 are detected in several pancreatic cell lines.

It localises to the nucleus. In terms of biological role, transcription factor that binds DNA in a sequence-specific manner. Participates in the Wnt signaling pathway. Activates transcription of target genes in the presence of CTNNB1 and EP300. PIAG antagonizes both Wnt-dependent and Wnt-independent activation by LEF1. TLE1, TLE2, TLE3 and TLE4 repress transactivation mediated by LEF1 and CTNNB1. Regulates T-cell receptor alpha enhancer function. Required for IL17A expressing gamma-delta T-cell maturation and development, via binding to regulator loci of BLK to modulate expression. Acts as a positive regulator of odontoblast differentiation during mesenchymal tooth germ formation, expression is repressed during the bell stage by MSX1-mediated inhibition of CTNNB1 signaling. May play a role in hair cell differentiation and follicle morphogenesis. Transcriptionally activates MYC and CCND1 expression and enhances proliferation of pancreatic tumor cells. Functionally, lacks the CTNNB1 interaction domain and may therefore be an antagonist for Wnt signaling. Its function is as follows. Transcriptionally activates the fibronectin promoter, binds to and represses transcription from the E-cadherin promoter in a CTNNB1-independent manner, and is involved in reducing cellular aggregation and increasing cell migration of pancreatic cancer cells. The polypeptide is Lymphoid enhancer-binding factor 1 (Homo sapiens (Human)).